Reading from the N-terminus, the 243-residue chain is Segregation and condensation protein A (243 aa).

This sequence belongs to the ScpA family. As to quaternary structure, component of a cohesin-like complex composed of ScpA, ScpB and the Smc homodimer, in which ScpA and ScpB bind to the head domain of Smc. The presence of the three proteins is required for the association of the complex with DNA.

It is found in the cytoplasm. Functionally, participates in chromosomal partition during cell division. May act via the formation of a condensin-like complex containing Smc and ScpB that pull DNA away from mid-cell into both cell halves. The sequence is that of Segregation and condensation protein A from Staphylococcus epidermidis (strain ATCC 35984 / DSM 28319 / BCRC 17069 / CCUG 31568 / BM 3577 / RP62A).